The chain runs to 1245 residues: MATINELYPVPYNVLAHPIKEVDDPYSWSNLLKGIQEGWEEWGKTGQKKLFEDHLTIAWNLYKTGKLDYFALTKASISLIGFIPGAEAAVPFINMFVDFVWPKLFGANTEGKDQQLFNAIMDAVNKMVDNKFLSYNLSTLNKTIEGLQGNLGLFQNAIQVAICQGSTPERVNFDQNCTPCNPNQPCKDDLDRVASRFDTANSQFTQHLPEFKNPWSDENSTQEFKRTSVELTLPMYTTVATLHLLLYEGYIEFMTKWNFHNEQYLNNLKVELQQLIHSYSETVRTSFLQFLPTLNNRSKSSVNAYNRYVRNMTVNCLDIAATWPTFDTHNYHQGGKLDLTRIILSDTAGPIEEYTTGDKTSGPEHSNITPNNILDTPSPTYQHSFVSVDSIVYSRKELQQLDIATYSTNNSNNCHPYGLRLSYTDGSRYDYGDNQPDFTTSNNNYCHNSYTAPITLVNARHLYNAKGSLQNVESLVVSTVNGGSGSCICDAWINYLRPPQTSKNESRPDQKINVLYPITETVNKGTGGNLGVISAYVPMELVPENVIGDVNADTKLPLTQLKGFPFEKYGSEYNNRGISLVREWINGNNAVKLSNSQSVGIQITNQTKQKYEIRCRYASKGDNNVYFNVDLSENPFRNSISFGSTESSVVGVQGENGKYILKSITTVEIPAGSFYVHITNQGSSDLFLDRIEFVPKIQFQFCDNNNLHCDCNNPVDTDCTFCCVCTSLTDCDCNNPRGLDCTLCCQVENQLPSFVTLTDLQNITTQVNALVASSEHDTLATDVSDYEIEEVVLKVDALSGEVFGKEKKALRKLVNHTKRLSKARNLLIGGNFDNLDAWYRGRNVVNVSDHELFKSDHVLLPPPTLYSSYMFQKVEESKLKANTRYTVSGFIAHAEDLEIVVSRYGQEVKKVVQVPYGEAFPLTSRGAICCPPRSTSNGKPADPHFFSYSIDVGTLDVEANPGIELGLRIVERTGMARVSNLEIREDRPLKKNELRNVQRAARNWRTAYDQERAEVTALIQPVLNQINALYENEDWNGAIRSGVSYHDLEAIVLPTLPKLNHWFMSDMLGEQGSILAQFQEALDRAYTQLEESTILHNGHFTTDAANWTIEGDAHHAILEDGRRVLRLPDWSSSVSQTIEIENFDPDKEYQLVFHAQGEGTVSLQHGEEGEYVETHPHKSANFTTSHRQGVTFETNKVTVEITSEDGEFLVDHIALVEAPLPTDDQSSDGNTTSNTNSNTSMNNNQ.

The interval 1219–1245 (PLPTDDQSSDGNTTSNTNSNTSMNNNQ) is disordered. Over residues 1222 to 1245 (TDDQSSDGNTTSNTNSNTSMNNNQ) the composition is skewed to low complexity.

This sequence belongs to the delta endotoxin family.

Functionally, promotes colloidosmotic lysis by binding to the midgut epithelial cells of hymenopteran species. The sequence is that of Pesticidal crystal protein Cry5Ba (cry5Ba) from Bacillus thuringiensis.